The primary structure comprises 100 residues: Large ribosomal subunit protein uL23 (100 aa).

This sequence belongs to the universal ribosomal protein uL23 family. As to quaternary structure, part of the 50S ribosomal subunit. Contacts protein L29, and trigger factor when it is bound to the ribosome.

One of the early assembly proteins it binds 23S rRNA. One of the proteins that surrounds the polypeptide exit tunnel on the outside of the ribosome. Forms the main docking site for trigger factor binding to the ribosome. This Pseudothermotoga lettingae (strain ATCC BAA-301 / DSM 14385 / NBRC 107922 / TMO) (Thermotoga lettingae) protein is Large ribosomal subunit protein uL23.